Here is a 143-residue protein sequence, read N- to C-terminus: 3-dehydroquinate dehydratase (143 aa).

The active-site Proton acceptor is Tyr-21. Asn-73, His-79, and Asp-86 together coordinate substrate. His-99 acts as the Proton donor in catalysis. Substrate is bound by residues 100–101 and Arg-110; that span reads IS.

It belongs to the type-II 3-dehydroquinase family. As to quaternary structure, homododecamer.

It catalyses the reaction 3-dehydroquinate = 3-dehydroshikimate + H2O. It participates in metabolic intermediate biosynthesis; chorismate biosynthesis; chorismate from D-erythrose 4-phosphate and phosphoenolpyruvate: step 3/7. In terms of biological role, catalyzes a trans-dehydration via an enolate intermediate. In Deinococcus radiodurans (strain ATCC 13939 / DSM 20539 / JCM 16871 / CCUG 27074 / LMG 4051 / NBRC 15346 / NCIMB 9279 / VKM B-1422 / R1), this protein is 3-dehydroquinate dehydratase.